A 490-amino-acid polypeptide reads, in one-letter code: Cis-aconitate decarboxylase (490 aa).

The protein belongs to the PrpD family.

The protein resides in the mitochondrion. The enzyme catalyses cis-aconitate + H(+) = itaconate + CO2. In terms of biological role, involved in the production of itaconic acid, a soluble unsaturated dicarboxylic acid mainly produced from sugars. This Aspergillus terreus protein is Cis-aconitate decarboxylase (cad1).